The chain runs to 226 residues: ATP-dependent dethiobiotin synthetase BioD (226 aa).

12-17 (GVGKTV) provides a ligand contact to ATP. Thr16 is a Mg(2+) binding site. Lys37 is an active-site residue. Residue Thr41 coordinates substrate. ATP is bound by residues Asp49, 108–111 (EGAG), and 169–170 (GS). Positions 49 and 108 each coordinate Mg(2+).

It belongs to the dethiobiotin synthetase family. In terms of assembly, homodimer. It depends on Mg(2+) as a cofactor.

Its subcellular location is the cytoplasm. The catalysed reaction is (7R,8S)-7,8-diammoniononanoate + CO2 + ATP = (4R,5S)-dethiobiotin + ADP + phosphate + 3 H(+). Its pathway is cofactor biosynthesis; biotin biosynthesis; biotin from 7,8-diaminononanoate: step 1/2. Catalyzes a mechanistically unusual reaction, the ATP-dependent insertion of CO2 between the N7 and N8 nitrogen atoms of 7,8-diaminopelargonic acid (DAPA, also called 7,8-diammoniononanoate) to form a ureido ring. This Mycobacterium marinum (strain ATCC BAA-535 / M) protein is ATP-dependent dethiobiotin synthetase BioD.